Reading from the N-terminus, the 96-residue chain is MAKYEILYIIRPNIEEEAKNALVARFDSILTDNGATIVESKDWEKRRLAYEINDFREGLYHIVNLEATDAVALNEFDRLSKINGDILRHMIVKLDA.

The protein belongs to the bacterial ribosomal protein bS6 family.

Its function is as follows. Binds together with bS18 to 16S ribosomal RNA. In Streptococcus equi subsp. equi (strain 4047), this protein is Small ribosomal subunit protein bS6.